We begin with the raw amino-acid sequence, 445 residues long: F-box protein At5g10340 (445 aa).

Residues 64–112 (SMEELLPHDVIEYHIMVRLDVKTLLKFKSVSKQWMSTIQSPSFQERQLI) enclose the F-box domain.

The protein is F-box protein At5g10340 of Arabidopsis thaliana (Mouse-ear cress).